A 92-amino-acid polypeptide reads, in one-letter code: MKFFMVFAVTFCLALSFVSQSLALPADDEAHFVDGLEALKTIEPELHGRYKRATCDLLSGTGVKHSACAAHCLLRGNRGGYCNGRAICVCRN.

Positions 1–23 (MKFFMVFAVTFCLALSFVSQSLA) are cleaved as a signal peptide. Residues 24–52 (LPADDEAHFVDGLEALKTIEPELHGRYKR) constitute a propeptide that is removed on maturation. 3 disulfide bridges follow: Cys-55-Cys-82, Cys-68-Cys-88, and Cys-72-Cys-90.

The protein belongs to the invertebrate defensin family. Type 1 subfamily. Post-translationally, the disulfide bonds are essential for antimicrobial activity. As to expression, larval fat body, hemolymph and salivary glands (at protein level). Expressed in the salivary glands of all larval stages.

It is found in the secreted. It localises to the host cell membrane. Shows strong antibacterial activity against numerous Gram-positive bacteria. It selectively inhibits peptidoglycan biosynthesis through complex formation with the cell wall precursor lipid II (1:1 molar ratio) thus inhibiting cell wall synthesis. Shows antibacterial activity against the Gram-positive bacteria M.luteus, E.fecalis (MIC=32 mg/L), S.aureus (MIC=16 mg/L), S.carnosus (MIC=2 mg/L), S.pneumoniae (MIC=2 mg/L) and S.pyogenes (MIC=2 mg/L) and against a number of methicillin-resistant S.aureus and glycopeptide-intermediate S.aureus isolates. Does not show antibacterial activity against Gram-negative bacteria or antifungal activity against C.utilis. Shows slight antifungal activity against C.albicans. The sequence is that of Defensin Lucifensin from Lucilia sericata (Green bottle fly).